The primary structure comprises 337 residues: Exopolysaccharide phosphotransferase cps2G (337 aa).

This sequence belongs to the stealth family.

This Lactiplantibacillus plantarum (strain ATCC BAA-793 / NCIMB 8826 / WCFS1) (Lactobacillus plantarum) protein is Exopolysaccharide phosphotransferase cps2G (cps2G).